The sequence spans 341 residues: Putative UPF0607 protein ENSP00000383783 (341 aa).

Residues 75-101 (EVRAEEPKEATEVKDQVETQGQEDNKR) are compositionally biased toward basic and acidic residues. Disordered stretches follow at residues 75–115 (EVRA…TSSL) and 216–278 (GLLM…PPPA). Positions 234–245 (SSRSSPSRAASH) are enriched in low complexity.

It belongs to the UPF0607 family.

This is Putative UPF0607 protein ENSP00000383783 from Homo sapiens (Human).